Consider the following 201-residue polypeptide: MAAAGSCSSAGKSLLQFMKLVGQLKRVPRTGWIYRQVEKPESVSDHMYRMAVMAMLTEDRKLNKDRCIRLALVHDMAECIVGDIAPADNIAKEEKHRKEKAAMEHLTQLLPDNLKTEVYDLWEEYEHQFTAEAKFVKELDQCEMILQALEYEELEKRPGRLQDFYNSTAGKFKHPEIVQLVSAIYEERNSAIAENARTSQT.

In terms of domain architecture, HD spans 43-145 (VSDHMYRMAV…VKELDQCEMI (103 aa)). A divalent metal cation-binding residues include His46, His74, Asp75, Glu78, Asp83, Ile84, and Asp140.

The protein belongs to the HDDC2 family. As to quaternary structure, homodimer. Requires Mn(2+) as cofactor. It depends on Co(2+) as a cofactor. Mg(2+) serves as cofactor.

The catalysed reaction is a 2'-deoxyribonucleoside 5'-phosphate + H2O = a 2'-deoxyribonucleoside + phosphate. Functionally, catalyzes the dephosphorylation of the nucleoside 5'-monophosphates deoxyadenosine monophosphate (dAMP), deoxycytidine monophosphate (dCMP), deoxyguanosine monophosphate (dGMP) and deoxythymidine monophosphate (dTMP). This chain is 5'-deoxynucleotidase HDDC2 (hddc2), found in Xenopus laevis (African clawed frog).